The chain runs to 187 residues: UPF0301 protein Cpha266_0885 (187 aa).

Belongs to the UPF0301 (AlgH) family.

The sequence is that of UPF0301 protein Cpha266_0885 from Chlorobium phaeobacteroides (strain DSM 266 / SMG 266 / 2430).